Here is a 63-residue protein sequence, read N- to C-terminus: U-reduvitoxin-Pr9a (63 aa).

Residues 1-19 (MRFFSLFTFLVAFIAAALA) form the signal peptide. Positions 20-42 (APVEIGEDLFALRPTGAKRDIIL) are excised as a propeptide. The cysteines at positions 47 and 60 are disulfide-linked.

Expressed by the venom gland.

It is found in the secreted. The protein is U-reduvitoxin-Pr9a of Platymeris rhadamanthus (Red spot assassin bug).